The chain runs to 234 residues: 1-(5-phosphoribosyl)-5-[(5-phosphoribosylamino)methylideneamino] imidazole-4-carboxamide isomerase (234 aa).

Asp8 acts as the Proton acceptor in catalysis. Asp128 functions as the Proton donor in the catalytic mechanism.

Belongs to the HisA/HisF family.

It localises to the cytoplasm. It catalyses the reaction 1-(5-phospho-beta-D-ribosyl)-5-[(5-phospho-beta-D-ribosylamino)methylideneamino]imidazole-4-carboxamide = 5-[(5-phospho-1-deoxy-D-ribulos-1-ylimino)methylamino]-1-(5-phospho-beta-D-ribosyl)imidazole-4-carboxamide. The protein operates within amino-acid biosynthesis; L-histidine biosynthesis; L-histidine from 5-phospho-alpha-D-ribose 1-diphosphate: step 4/9. This chain is 1-(5-phosphoribosyl)-5-[(5-phosphoribosylamino)methylideneamino] imidazole-4-carboxamide isomerase, found in Cenarchaeum symbiosum (strain A).